The chain runs to 472 residues: Siroheme synthase 2 (472 aa).

Positions 1–204 (MDYFPIFCQL…EDQVQVEQHV (204 aa)) are precorrin-2 dehydrogenase /sirohydrochlorin ferrochelatase. Residues 22–23 (EV) and 43–44 (CE) each bind NAD(+). Phosphoserine is present on S128. Residues 216–472 (GEVVLVGAGP…GMKEQVERVG (257 aa)) are uroporphyrinogen-III C-methyltransferase. P225 provides a ligand contact to S-adenosyl-L-methionine. D248 acts as the Proton acceptor in catalysis. K270 functions as the Proton donor in the catalytic mechanism. S-adenosyl-L-methionine is bound by residues 301 to 303 (GGD), I306, 331 to 332 (TA), M382, and G411.

This sequence in the N-terminal section; belongs to the precorrin-2 dehydrogenase / sirohydrochlorin ferrochelatase family. In the C-terminal section; belongs to the precorrin methyltransferase family.

The catalysed reaction is uroporphyrinogen III + 2 S-adenosyl-L-methionine = precorrin-2 + 2 S-adenosyl-L-homocysteine + H(+). It carries out the reaction precorrin-2 + NAD(+) = sirohydrochlorin + NADH + 2 H(+). It catalyses the reaction siroheme + 2 H(+) = sirohydrochlorin + Fe(2+). Its pathway is cofactor biosynthesis; adenosylcobalamin biosynthesis; precorrin-2 from uroporphyrinogen III: step 1/1. It participates in cofactor biosynthesis; adenosylcobalamin biosynthesis; sirohydrochlorin from precorrin-2: step 1/1. The protein operates within porphyrin-containing compound metabolism; siroheme biosynthesis; precorrin-2 from uroporphyrinogen III: step 1/1. It functions in the pathway porphyrin-containing compound metabolism; siroheme biosynthesis; siroheme from sirohydrochlorin: step 1/1. Its pathway is porphyrin-containing compound metabolism; siroheme biosynthesis; sirohydrochlorin from precorrin-2: step 1/1. Its function is as follows. Multifunctional enzyme that catalyzes the SAM-dependent methylations of uroporphyrinogen III at position C-2 and C-7 to form precorrin-2 via precorrin-1. Then it catalyzes the NAD-dependent ring dehydrogenation of precorrin-2 to yield sirohydrochlorin. Finally, it catalyzes the ferrochelation of sirohydrochlorin to yield siroheme. The chain is Siroheme synthase 2 from Yersinia enterocolitica serotype O:8 / biotype 1B (strain NCTC 13174 / 8081).